We begin with the raw amino-acid sequence, 103 residues long: Large ribosomal subunit protein bL21 (103 aa).

Belongs to the bacterial ribosomal protein bL21 family. Part of the 50S ribosomal subunit. Contacts protein L20.

Functionally, this protein binds to 23S rRNA in the presence of protein L20. The polypeptide is Large ribosomal subunit protein bL21 (Vibrio parahaemolyticus serotype O3:K6 (strain RIMD 2210633)).